Here is a 638-residue protein sequence, read N- to C-terminus: Poly(A)-specific ribonuclease PARN (638 aa).

Residues aspartate 28 and glutamate 30 each coordinate a divalent metal cation. The disordered stretch occupies residues 143–165 (REQYDEKRSQSNGAGALSYTSPN). The segment covering 152-165 (QSNGAGALSYTSPN) has biased composition (polar residues). 2 positions are modified to phosphoserine: serine 163 and serine 167. Positions 178–245 (KKFIDQVVEK…ERYIVISKVD (68 aa)) constitute an R3H domain. The residue at position 220 (lysine 220) is an N6-acetyllysine. A divalent metal cation-binding residues include aspartate 292 and aspartate 382. N6-acetyllysine is present on lysine 499. Residue serine 530 is modified to Phosphoserine. A Phosphoserine; by MAPKAPK2 modification is found at serine 557. The disordered stretch occupies residues 573–638 (RAEAGLEARA…AKLFEVPDTW (66 aa)). Serine 583 and serine 587 each carry phosphoserine. The segment covering 606–615 (KKAKKLKRMK) has biased composition (basic residues). Phosphoserine is present on residues serine 619, serine 623, and serine 627.

It belongs to the CAF1 family. As to quaternary structure, homodimer. Found in a mRNA decay complex with RENT1, RENT2 and RENT3B. Interacts with KHSRP. Interacts with CELF1/CUGBP1. Interacts with ZC3HAV1 in an RNA-independent manner. Interacts with DHX36. It depends on Mg(2+) as a cofactor. Phosphorylation by MAPKAPK2, preventing GADD45A mRNA degradation after genotoxic stress.

It localises to the nucleus. Its subcellular location is the cytoplasm. It is found in the nucleolus. It carries out the reaction Exonucleolytic cleavage of poly(A) to 5'-AMP.. Its function is as follows. 3'-exoribonuclease that has a preference for poly(A) tails of mRNAs, thereby efficiently degrading poly(A) tails. Exonucleolytic degradation of the poly(A) tail is often the first step in the decay of eukaryotic mRNAs and is also used to silence certain maternal mRNAs translationally during oocyte maturation and early embryonic development. Involved in nonsense-mediated mRNA decay, a critical process of selective degradation of mRNAs that contain premature stop codons. Also involved in degradation of inherently unstable mRNAs that contain AU-rich elements (AREs) in their 3'-UTR, possibly via its interaction with KHSRP. Probably mediates the removal of poly(A) tails of AREs mRNAs, which constitutes the first step of destabilization. Interacts with both the 3'-end poly(A) tail and the 5'-end cap structure during degradation, the interaction with the cap structure being required for an efficient degradation of poly(A) tails. Also able to recognize poly(A) tails of microRNAs such as MIR21 and H/ACA box snoRNAs (small nucleolar RNAs) leading to microRNAs degradation or snoRNA increased stability. The protein is Poly(A)-specific ribonuclease PARN (PARN) of Bos taurus (Bovine).